The following is a 294-amino-acid chain: Putative glutamine amidotransferase HI_1037 (294 aa).

Cys-18 is a catalytic residue. The Glutamine amidotransferase type-2 domain maps to Cys-18–Gly-266.

The polypeptide is Putative glutamine amidotransferase HI_1037 (Haemophilus influenzae (strain ATCC 51907 / DSM 11121 / KW20 / Rd)).